The sequence spans 142 residues: Putative pre-16S rRNA nuclease (142 aa).

The protein belongs to the YqgF nuclease family.

It localises to the cytoplasm. In terms of biological role, could be a nuclease involved in processing of the 5'-end of pre-16S rRNA. This Saccharophagus degradans (strain 2-40 / ATCC 43961 / DSM 17024) protein is Putative pre-16S rRNA nuclease.